Reading from the N-terminus, the 348-residue chain is 3-keto-steroid reductase (348 aa).

NADP(+) is bound by residues Leu-18, Thr-41, and Arg-47. Catalysis depends on proton donor residues Ser-180 and Tyr-203. The NADP(+) site is built by Tyr-203, Lys-207, and Ser-238. The Lowers pKa of active site Tyr role is filled by Lys-207.

It belongs to the short-chain dehydrogenases/reductases (SDR) family. ERG27 subfamily.

It catalyses the reaction a 3beta-hydroxysteroid + NADP(+) = a 3-oxosteroid + NADPH + H(+). The protein operates within steroid biosynthesis; zymosterol biosynthesis; zymosterol from lanosterol: step 5/6. In terms of biological role, responsible for the reduction of the keto group on the C-3 of sterols. The protein is 3-keto-steroid reductase (ERG27) of Candida glabrata (strain ATCC 2001 / BCRC 20586 / JCM 3761 / NBRC 0622 / NRRL Y-65 / CBS 138) (Yeast).